The following is a 671-amino-acid chain: DNA ligase (671 aa).

NAD(+) is bound by residues 31 to 35 (DAEYD), 80 to 81 (SL), and Glu110. Lys112 serves as the catalytic N6-AMP-lysine intermediate. NAD(+) is bound by residues Arg133, Glu167, Lys283, and Lys307. Zn(2+) is bound by residues Cys401, Cys404, Cys419, and Cys424. Positions 587–671 (EEELVFAGKT…YLPDEGGLNE (85 aa)) constitute a BRCT domain.

Belongs to the NAD-dependent DNA ligase family. LigA subfamily. It depends on Mg(2+) as a cofactor. Mn(2+) is required as a cofactor.

The catalysed reaction is NAD(+) + (deoxyribonucleotide)n-3'-hydroxyl + 5'-phospho-(deoxyribonucleotide)m = (deoxyribonucleotide)n+m + AMP + beta-nicotinamide D-nucleotide.. DNA ligase that catalyzes the formation of phosphodiester linkages between 5'-phosphoryl and 3'-hydroxyl groups in double-stranded DNA using NAD as a coenzyme and as the energy source for the reaction. It is essential for DNA replication and repair of damaged DNA. This chain is DNA ligase, found in Listeria monocytogenes serotype 4b (strain CLIP80459).